Here is a 293-residue protein sequence, read N- to C-terminus: Probable aspartoacylase (293 aa).

Zn(2+) contacts are provided by H14 and E17. Residues R56 and 63-64 contribute to the substrate site; that span reads NR. H106 is a binding site for Zn(2+). 2 residues coordinate substrate: E165 and Y276.

The protein belongs to the AspA/AstE family. Aspartoacylase subfamily. Zn(2+) is required as a cofactor.

The enzyme catalyses an N-acyl-L-aspartate + H2O = a carboxylate + L-aspartate. The sequence is that of Probable aspartoacylase from Trichodesmium erythraeum (strain IMS101).